Consider the following 466-residue polypeptide: Glutamate--tRNA ligase 1 (466 aa).

The 'HIGH' region motif lies at 9–19 (PSPTGLLHIGN). A 'KMSKS' region motif is present at residues 238 to 242 (KLSKR). Lysine 241 provides a ligand contact to ATP.

The protein belongs to the class-I aminoacyl-tRNA synthetase family. Glutamate--tRNA ligase type 1 subfamily. As to quaternary structure, monomer.

The protein resides in the cytoplasm. The catalysed reaction is tRNA(Glu) + L-glutamate + ATP = L-glutamyl-tRNA(Glu) + AMP + diphosphate. Its function is as follows. Catalyzes the attachment of glutamate to tRNA(Glu) in a two-step reaction: glutamate is first activated by ATP to form Glu-AMP and then transferred to the acceptor end of tRNA(Glu). This is Glutamate--tRNA ligase 1 from Gluconacetobacter diazotrophicus (strain ATCC 49037 / DSM 5601 / CCUG 37298 / CIP 103539 / LMG 7603 / PAl5).